We begin with the raw amino-acid sequence, 435 residues long: Ras association domain-containing protein 9 (435 aa).

Positions 1 to 22 are disordered; it reads MAPFGRNLLKTRHKNRSPTKDM. One can recognise a Ras-associating domain in the interval 25–119; that stretch reads EEKEIVVWVC…MQFVLVKADA (95 aa). Residues 195 to 290 are a coiled coil; the sequence is HTIHQQVKRM…DKLSAEIEKE (96 aa). The segment at 380-435 is disordered; that stretch reads NRAKESEVPSSNGEIPPFTQRVFSNYTNDTDSDTGISSNHSQDSETTVGDVVLLST. Over residues 400 to 426 the composition is skewed to polar residues; that stretch reads RVFSNYTNDTDSDTGISSNHSQDSETT.

Interacts with PAM.

Its subcellular location is the endosome. In terms of biological role, may play a role in regulating vesicuar trafficking in cells. The chain is Ras association domain-containing protein 9 (RASSF9) from Homo sapiens (Human).